Here is a 74-residue protein sequence, read N- to C-terminus: Probable tetrachloroethene reductive dehalogenase membrane anchor protein (74 aa).

The next 2 helical transmembrane spans lie at 11–31 and 40–60; these read ALGLSLLYLALILVTFQISMG and AGSILMVAGLIFSIIGVFLLM.

This sequence belongs to the PceB family.

It localises to the cell inner membrane. Its function is as follows. May act as a membrane anchor for the tetrachloroethene reductive dehalogenase PceA. The polypeptide is Probable tetrachloroethene reductive dehalogenase membrane anchor protein (Sulfurospirillum multivorans (Dehalospirillum multivorans)).